The primary structure comprises 461 residues: Phosphoglycerate kinase, chloroplastic (461 aa).

Residues 1-60 (MALSMKMRANARVSGRRVAAVAPRVVPFSSASSSVLRSGFALRCLWTSAAWAALASVVEA) constitute a chloroplast transit peptide. Positions 82, 83, 85, 100, 122, 123, 125, 126, 182, 214, and 215 each coordinate (2R)-3-phosphoglycerate. Glycine 260 lines the ADP pocket. Glycine 260 serves as a coordination point for CDP. The AMP site is built by lysine 262 and lysine 266. Lysine 266 lines the ATP pocket. An ADP-binding site is contributed by glycine 284. Glycine 284 contributes to the CDP binding site. The AMP site is built by glycine 285 and glycine 357. Glycine 285 and glycine 357 together coordinate ATP. CDP-binding residues include glycine 382 and phenylalanine 387. Phenylalanine 387 provides a ligand contact to ADP. Glutamate 388 is a binding site for AMP. Positions 388, 419, and 420 each coordinate ATP. Aspartate 419 provides a ligand contact to Mg(2+).

Belongs to the phosphoglycerate kinase family. Monomer. Mg(2+) is required as a cofactor.

It is found in the plastid. Its subcellular location is the chloroplast. The catalysed reaction is (2R)-3-phosphoglycerate + ATP = (2R)-3-phospho-glyceroyl phosphate + ADP. It functions in the pathway carbohydrate biosynthesis; Calvin cycle. The chain is Phosphoglycerate kinase, chloroplastic from Chlamydomonas reinhardtii (Chlamydomonas smithii).